A 428-amino-acid chain; its full sequence is 5'-deoxyadenosine deaminase (428 aa).

Zn(2+) contacts are provided by His59 and His61. Residues Glu88 and His180 each coordinate substrate. His207 contacts Zn(2+). 2 residues coordinate substrate: Glu210 and Asp296. Asp296 serves as a coordination point for Zn(2+).

The protein belongs to the metallo-dependent hydrolases superfamily. MTA/SAH deaminase family. In terms of assembly, homotetramer. Requires Zn(2+) as cofactor.

The enzyme catalyses 5'-deoxyadenosine + H2O + H(+) = 5'-deoxyinosine + NH4(+). It catalyses the reaction S-adenosyl-L-homocysteine + H2O + H(+) = S-inosyl-L-homocysteine + NH4(+). It carries out the reaction S-methyl-5'-thioadenosine + H2O + H(+) = S-methyl-5'-thioinosine + NH4(+). The catalysed reaction is adenosine + H2O + H(+) = inosine + NH4(+). It functions in the pathway amino-acid biosynthesis; S-adenosyl-L-methionine biosynthesis. Catalyzes the deamination of three SAM-derived enzymatic products, namely 5'-deoxyadenosine, S-adenosyl-L-homocysteine, and 5'-methylthioadenosine, to produce the inosine analogs. Can also deaminate adenosine. The preferred substrate for this enzyme is 5'-deoxyadenosine, but all these substrates are efficiently deaminated. Likely functions in a S-adenosyl-L-methionine (SAM) recycling pathway from S-adenosyl-L-homocysteine (SAH) produced from SAM-dependent methylation reactions. May also be involved in the recycling of 5'-deoxyadenosine, whereupon the 5'-deoxyribose moiety of 5'-deoxyinosine is further metabolized to deoxyhexoses used for the biosynthesis of aromatic amino acids in methanogens. The chain is 5'-deoxyadenosine deaminase from Methanococcus aeolicus (strain ATCC BAA-1280 / DSM 17508 / OCM 812 / Nankai-3).